Reading from the N-terminus, the 119-residue chain is MSPRKTYILKLYVAGNTPNSMRALKTLRDILENEFRGVYALKVIDVLKNPQLAEADKILATPTLAKILPPPVRRIIGDLSDRERVLIGLDLLYDEISEEMLGSAELDTLADDDIASPDS.

This sequence belongs to the KaiB family. In terms of assembly, may undergo a major conformational rearrangment; in the free state forms homooligomers. When bound to KaiC switches to a monomeric thioredoxin-fold (KaiB(fs)). The active oscillator complex is probably KaiC(6):KaiB(6).

Its function is as follows. Component of the KaiBC clock protein complex, which constitutes the main circadian regulator in cyanobacteria; it may modify the ATPase activity of KaiC. In terms of biological role, may be a metamorphic protein which reversibly switches between an inactive tetrameric fold and a rare, thioredoxin-like monomeric fold (KaiB(fs)). KaiB(fs) binds phospho-KaiC, and perhaps clock output effectors. The protein is Circadian clock oscillator protein KaiB of Prochlorococcus marinus (strain MIT 9313).